The following is a 651-amino-acid chain: Acetyl-coenzyme A synthetase (651 aa).

CoA contacts are provided by residues 193–196 and T312; that span reads RRGK. ATP is bound by residues 388–390, 412–417, D501, and R516; these read GEP and DTWWQT. S524 provides a ligand contact to CoA. Mg(2+) is bound by residues V538, H540, and V543. K610 is subject to N6-acetyllysine.

This sequence belongs to the ATP-dependent AMP-binding enzyme family. The cofactor is Mg(2+). Post-translationally, acetylated. Deacetylation by the SIR2-homolog deacetylase activates the enzyme.

It carries out the reaction acetate + ATP + CoA = acetyl-CoA + AMP + diphosphate. Functionally, catalyzes the conversion of acetate into acetyl-CoA (AcCoA), an essential intermediate at the junction of anabolic and catabolic pathways. AcsA undergoes a two-step reaction. In the first half reaction, AcsA combines acetate with ATP to form acetyl-adenylate (AcAMP) intermediate. In the second half reaction, it can then transfer the acetyl group from AcAMP to the sulfhydryl group of CoA, forming the product AcCoA. This Streptomyces coelicolor (strain ATCC BAA-471 / A3(2) / M145) protein is Acetyl-coenzyme A synthetase.